A 384-amino-acid polypeptide reads, in one-letter code: Outer membrane protein assembly factor BamB (384 aa).

A signal peptide spans 1–21 (MKLTLKRKFIAVLALTSLLGA). C22 carries N-palmitoyl cysteine lipidation. C22 carries S-diacylglycerol cysteine lipidation.

This sequence belongs to the BamB family. In terms of assembly, part of the Bam complex.

Its subcellular location is the cell outer membrane. In terms of biological role, part of the outer membrane protein assembly complex, which is involved in assembly and insertion of beta-barrel proteins into the outer membrane. This is Outer membrane protein assembly factor BamB from Taylorella asinigenitalis (strain MCE3).